Here is a 96-residue protein sequence, read N- to C-terminus: Putative pterin-4-alpha-carbinolamine dehydratase (96 aa).

Belongs to the pterin-4-alpha-carbinolamine dehydratase family.

The enzyme catalyses (4aS,6R)-4a-hydroxy-L-erythro-5,6,7,8-tetrahydrobiopterin = (6R)-L-erythro-6,7-dihydrobiopterin + H2O. The sequence is that of Putative pterin-4-alpha-carbinolamine dehydratase from Novosphingobium aromaticivorans (strain ATCC 700278 / DSM 12444 / CCUG 56034 / CIP 105152 / NBRC 16084 / F199).